The following is a 405-amino-acid chain: Arginine deiminase (405 aa).

Cysteine 395 functions as the Amidino-cysteine intermediate in the catalytic mechanism.

It belongs to the arginine deiminase family.

It localises to the cytoplasm. It catalyses the reaction L-arginine + H2O = L-citrulline + NH4(+). It participates in amino-acid degradation; L-arginine degradation via ADI pathway; carbamoyl phosphate from L-arginine: step 1/2. This is Arginine deiminase from Rhodococcus erythropolis (strain PR4 / NBRC 100887).